Consider the following 273-residue polypeptide: NADH-ubiquinone oxidoreductase 29.9 kDa subunit, mitochondrial (273 aa).

Residues 1 to 8 (MRAALRLL) constitute a mitochondrion transit peptide.

Belongs to the complex I NDUFA5 subunit family. Complex I is composed of about 40 different subunits.

It localises to the mitochondrion inner membrane. In terms of biological role, accessory subunit of the mitochondrial membrane respiratory chain NADH dehydrogenase (Complex I), that is believed not to be involved in catalysis. Complex I functions in the transfer of electrons from NADH to the respiratory chain. The immediate electron acceptor for the enzyme is believed to be ubiquinone. This Neurospora crassa (strain ATCC 24698 / 74-OR23-1A / CBS 708.71 / DSM 1257 / FGSC 987) protein is NADH-ubiquinone oxidoreductase 29.9 kDa subunit, mitochondrial (nuo-32).